The primary structure comprises 205 residues: Small ribosomal subunit protein uS4 (205 aa).

The segment at 19 to 45 (IWGRPKSPVNRREYGPGQHGQRRKGKL) is disordered. The region spanning 94-157 (RRLDAVVYRA…KQLAFVLEAS (64 aa)) is the S4 RNA-binding domain.

In terms of assembly, part of the 30S ribosomal subunit. Contacts protein S5. The interaction surface between S4 and S5 is involved in control of translational fidelity. In terms of processing, may be methylated on an undetermined residue.

In terms of biological role, one of the primary rRNA binding proteins, it binds directly to 16S rRNA where it nucleates assembly of the body of the 30S subunit. Its function is as follows. With S5 and S12 plays an important role in translational accuracy. This is Small ribosomal subunit protein uS4 from Rhodopseudomonas palustris (strain ATCC BAA-98 / CGA009).